We begin with the raw amino-acid sequence, 526 residues long: MSTTVRPDEVSSILRKQLAGFESEAEVYDVGTVLQVGDGIARVYGLSKVAAGELLEFPNNVMGMALNLEEDNVGAVLFGESNLVKEGDTVKRTSILASIPVGEAMLGRVINPLGEPIDGKGTIDTQIRLPLERRAPGVIYRKSVHEPLQTGLKAIDSMIPIGRGQRELIIGDRQTGKTAVAIDTIINQKGKGVFCIYVAIGLKGSTVAQVVNTLEKYDAMEYTTVISATASDPAPLQFIAPFAGATLGEYFRDTGRHALVVYDDLSKQAVAYRQVSLLLRRPPGREAYPGDVFYLHSRLLERAAKITDDIEVARKMNDLPDALKSLVKGGGSLTALPVIETQAGDVSAYIPTNVISITDGQIFLESNLFNSGQRPAINVGISVSRVGGSAQIKAMKKVAGTLRLDLAQFRELEAFSKFGSDLDKTTKAQLDRGARLVEILKQGQYIPMPVEKQVAIIFLGTQGLLDTVDLRFIRKFEEEFLSLLEIKHNDLLAKIASSGALEADTAAKLKDIAVKFVTVFKEKNKA.

Residue 171-178 participates in ATP binding; sequence GDRQTGKT.

Belongs to the ATPase alpha/beta chains family. F-type ATPases have 2 components, CF(1) - the catalytic core - and CF(0) - the membrane proton channel. CF(1) has five subunits: alpha(3), beta(3), gamma(1), delta(1), epsilon(1). CF(0) has four main subunits: a, b, b' and c.

It is found in the cell inner membrane. It carries out the reaction ATP + H2O + 4 H(+)(in) = ADP + phosphate + 5 H(+)(out). Its function is as follows. Produces ATP from ADP in the presence of a proton gradient across the membrane. The alpha chain is a regulatory subunit. This Pelodictyon phaeoclathratiforme (strain DSM 5477 / BU-1) protein is ATP synthase subunit alpha.